The sequence spans 144 residues: Nucleoside diphosphate kinase (144 aa).

ATP-binding residues include Lys11, Phe59, Arg87, Thr93, Arg104, and Asn114. The active-site Pros-phosphohistidine intermediate is the His117.

Belongs to the NDK family. Homotetramer. The cofactor is Mg(2+).

The protein resides in the cytoplasm. It carries out the reaction a 2'-deoxyribonucleoside 5'-diphosphate + ATP = a 2'-deoxyribonucleoside 5'-triphosphate + ADP. It catalyses the reaction a ribonucleoside 5'-diphosphate + ATP = a ribonucleoside 5'-triphosphate + ADP. Major role in the synthesis of nucleoside triphosphates other than ATP. The ATP gamma phosphate is transferred to the NDP beta phosphate via a ping-pong mechanism, using a phosphorylated active-site intermediate. This Aliivibrio fischeri (strain MJ11) (Vibrio fischeri) protein is Nucleoside diphosphate kinase.